The chain runs to 645 residues: MMAAEIPRVTTPLSPLVQVPQEEDRQKEEVTTMILEDDSWVQEAVLQEDGPESEPFPQSAGKGSPQEEVTRGPQGALGRLRELCRRWLRPEVHTKEQMLTMLPKEIQAWLQEHRPESSEEAAALVEDLTQTLQDSGSQCVHQPFSVLTVCTVSSRTAWRVLELHLNYFEIQSENGENCNQDMFENESREIFSEMPEGESAQHSDGESDFERDAGIQRPQGHTPGKDHGEVLSQDREVGQLIGLQGTYLGEKPYECPQCGKTFSRKSHLITHERTHTGEKYYKCDECGKSFSDGSNFSRHQTTHTGEKPYKCRDCGKSFSRSANLITHQRIHTGEKPFQCAECGKSFSRSPNLIAHQRTHTGEKPYSCPECGKSFGNRSSLNTHQGIHTGEKPYECKECGESFSYNSNLIRHQRIHTGEKPYKCTDCGQRFSQSSALITHRRTHTGEKPYQCSECGKNFSRSSNLATHRRTHMVEKPYKCGVCGKSFSQSSSLIAHQGMHTGEKPYECLTCGESFSWSSNLLKHQRIHTGEKPYKCSECGKCFSQRSQLVVHQQTHTGEKPYKCLMCGKSFSRGSILVMHQRAHLGDKPYRCPECGKGFSWNSVLIIHQRIHTGEKPYKCPECGKGFSNSSNFITHQRTHMKEKLY.

3 disordered regions span residues 1 to 25, 37 to 75, and 193 to 230; these read MMAA…EEDR, DDSW…GPQG, and EMPE…HGEV. Positions 59–132 constitute an SCAN box domain; it reads SAGKGSPQEE…ALVEDLTQTL (74 aa). Over residues 199-214 the composition is skewed to basic and acidic residues; it reads SAQHSDGESDFERDAG. 14 C2H2-type zinc fingers span residues 253–275, 281–303, 309–331, 337–359, 365–387, 393–415, 421–443, 449–471, 477–499, 505–527, 533–555, 561–583, 589–611, and 617–639; these read YECP…ERTH, YKCD…QTTH, YKCR…QRIH, FQCA…QRTH, YSCP…QGIH, YECK…QRIH, YKCT…RRTH, YQCS…RRTH, YKCG…QGMH, YECL…QRIH, YKCS…QQTH, YKCL…QRAH, YRCP…QRIH, and YKCP…QRTH.

Belongs to the krueppel C2H2-type zinc-finger protein family.

It is found in the nucleus. May be involved in transcriptional regulation during the post-meiotic stages of spermatogenesis. The protein is Zinc finger and SCAN domain-containing protein 2 (ZSCAN2) of Pongo abelii (Sumatran orangutan).